Reading from the N-terminus, the 488-residue chain is Palmitoleoyl-protein carboxylesterase notum1 (488 aa).

An N-terminal signal peptide occupies residues 1–20 (MAGALCVTLLLLLSTNTVSG). An N-linked (GlcNAc...) asparagine glycan is attached at Asn-90. Catalysis depends on charge relay system residues Ser-226, Asp-334, and His-383.

Belongs to the pectinacetylesterase family. Notum subfamily. In terms of tissue distribution, expressed in the egg and through cleavage to gastrulation stages. Enriched in the animal (prospective ectoderm) and dorsal regions in early gastrula. Shows a dynamic expression during embryogenesis, in particular during neural induction and antero-posterior (AP) patterning.

Its subcellular location is the secreted. The catalysed reaction is [Wnt protein]-O-(9Z)-hexadecenoyl-L-serine + H2O = [Wnt protein]-L-serine + (9Z)-hexadecenoate + H(+). Functionally, carboxylesterase that acts as a key negative regulator of the Wnt signaling pathway by specifically mediating depalmitoleoylation of WNT proteins. Serine palmitoleoylation of WNT proteins is required for efficient binding to frizzled receptors. Functions in the prospective ectoderm and is required for neural induction. This is Palmitoleoyl-protein carboxylesterase notum1 from Xenopus laevis (African clawed frog).